A 172-amino-acid chain; its full sequence is Crossover junction endodeoxyribonuclease RuvC (172 aa).

Residues Asp-11, Glu-71, and Asp-143 contribute to the active site. The Mg(2+) site is built by Asp-11, Glu-71, and Asp-143.

It belongs to the RuvC family. In terms of assembly, homodimer which binds Holliday junction (HJ) DNA. The HJ becomes 2-fold symmetrical on binding to RuvC with unstacked arms; it has a different conformation from HJ DNA in complex with RuvA. In the full resolvosome a probable DNA-RuvA(4)-RuvB(12)-RuvC(2) complex forms which resolves the HJ. It depends on Mg(2+) as a cofactor.

It is found in the cytoplasm. The catalysed reaction is Endonucleolytic cleavage at a junction such as a reciprocal single-stranded crossover between two homologous DNA duplexes (Holliday junction).. The RuvA-RuvB-RuvC complex processes Holliday junction (HJ) DNA during genetic recombination and DNA repair. Endonuclease that resolves HJ intermediates. Cleaves cruciform DNA by making single-stranded nicks across the HJ at symmetrical positions within the homologous arms, yielding a 5'-phosphate and a 3'-hydroxyl group; requires a central core of homology in the junction. The consensus cleavage sequence is 5'-(A/T)TT(C/G)-3'. Cleavage occurs on the 3'-side of the TT dinucleotide at the point of strand exchange. HJ branch migration catalyzed by RuvA-RuvB allows RuvC to scan DNA until it finds its consensus sequence, where it cleaves and resolves the cruciform DNA. The chain is Crossover junction endodeoxyribonuclease RuvC from Brucella anthropi (strain ATCC 49188 / DSM 6882 / CCUG 24695 / JCM 21032 / LMG 3331 / NBRC 15819 / NCTC 12168 / Alc 37) (Ochrobactrum anthropi).